Here is a 387-residue protein sequence, read N- to C-terminus: Chorismate synthase (387 aa).

2 residues coordinate NADP(+): R40 and R46. FMN is bound by residues 129 to 131, 250 to 251, G295, 310 to 314, and R336; these read RSS, QA, and KPIPT.

This sequence belongs to the chorismate synthase family. As to quaternary structure, homotetramer. It depends on FMNH2 as a cofactor.

It carries out the reaction 5-O-(1-carboxyvinyl)-3-phosphoshikimate = chorismate + phosphate. Its pathway is metabolic intermediate biosynthesis; chorismate biosynthesis; chorismate from D-erythrose 4-phosphate and phosphoenolpyruvate: step 7/7. In terms of biological role, catalyzes the anti-1,4-elimination of the C-3 phosphate and the C-6 proR hydrogen from 5-enolpyruvylshikimate-3-phosphate (EPSP) to yield chorismate, which is the branch point compound that serves as the starting substrate for the three terminal pathways of aromatic amino acid biosynthesis. This reaction introduces a second double bond into the aromatic ring system. This chain is Chorismate synthase, found in Desulforamulus reducens (strain ATCC BAA-1160 / DSM 100696 / MI-1) (Desulfotomaculum reducens).